We begin with the raw amino-acid sequence, 308 residues long: uncharacterized protein (308 aa).

The ABC transporter domain maps to Leu6–Pro234. Gly38–Thr45 serves as a coordination point for ATP.

This sequence belongs to the ABC transporter superfamily.

This is an uncharacterized protein from Bacillus subtilis (strain 168).